We begin with the raw amino-acid sequence, 128 residues long: Organic solute transporter subunit beta (128 aa).

Residues 1-30 (MDHSAEKAAANAEVPQELLEEMLWYFRAED) lie on the Extracellular side of the membrane. Residues 31–53 (AAPWNYSILVLAVLVVMTSMFLL) form a helical membrane-spanning segment. The Cytoplasmic portion of the chain corresponds to 54 to 128 (RRSILANRNR…FLPDPQETES (75 aa)). Disordered regions lie at residues 61-80 (RNRK…HLDD) and 101-128 (PDLA…ETES). 2 stretches are compositionally biased toward basic and acidic residues: residues 66–80 (QPQD…HLDD) and 101–115 (PDLA…EKDS). S116 bears the Phosphoserine mark.

Belongs to the OST-beta family. As to quaternary structure, interacts with SLC51A. The Ost-alpha/Ost-beta complex is a heterodimer composed of alpha (SLC51A) and beta (SLC51B) subunit; induces the transport of SLC51A from the endoplasmic reticulum to the plasma membrane. Present at high level in ileum. In ileum, it is restricted to the apical domain on the mature villus enterocytes with little detectable expression in the goblet cells or crypt enterocytes (at protein level). Expressed in kidney but not in heart, brain, liver, spleen, embryo, lung, thymus, ovary nor testis.

The protein resides in the cell membrane. It catalyses the reaction taurocholate(out) = taurocholate(in). The enzyme catalyses tauroursodeoxycholate(out) = tauroursodeoxycholate(in). The catalysed reaction is glycoursodeoxycholate(out) = glycoursodeoxycholate(in). It carries out the reaction glycocholate(out) = glycocholate(in). It catalyses the reaction taurochenodeoxycholate(out) = taurochenodeoxycholate(in). The enzyme catalyses glycochenodeoxycholate(out) = glycochenodeoxycholate(in). The catalysed reaction is taurodeoxycholate(out) = taurodeoxycholate(in). It carries out the reaction glycodeoxycholate(out) = glycodeoxycholate(in). It catalyses the reaction prostaglandin E2(out) = prostaglandin E2(in). The enzyme catalyses estrone 3-sulfate(out) = estrone 3-sulfate(in). The catalysed reaction is dehydroepiandrosterone 3-sulfate(out) = dehydroepiandrosterone 3-sulfate(in). Its function is as follows. Essential component of the Ost-alpha/Ost-beta complex, a heterodimer that acts as the intestinal basolateral transporter responsible for bile acid export from enterocytes into portal blood. The Ost-alpha/Ost-beta complex efficiently transports the major species of bile acids (taurocholate). Taurine conjugates are transported more efficiently across the basolateral membrane than glycine-conjugated bile acids. Can also transport steroids such as estrone 3-sulfate and dehydroepiandrosterone 3-sulfate, therefore playing a role in the enterohepatic circulation of sterols. Able to transport eicosanoids such as prostaglandin E2. Modulates SLC51A glycosylation, membrane trafficking and stability activities. The chain is Organic solute transporter subunit beta (Slc51b) from Mus musculus (Mouse).